Consider the following 254-residue polypeptide: 5'-nucleotidase SurE (254 aa).

A divalent metal cation contacts are provided by Asp-8, Asp-9, Ser-40, and Asn-93.

It belongs to the SurE nucleotidase family. The cofactor is a divalent metal cation.

The protein localises to the cytoplasm. It catalyses the reaction a ribonucleoside 5'-phosphate + H2O = a ribonucleoside + phosphate. Its function is as follows. Nucleotidase that shows phosphatase activity on nucleoside 5'-monophosphates. This chain is 5'-nucleotidase SurE, found in Rhizorhabdus wittichii (strain DSM 6014 / CCUG 31198 / JCM 15750 / NBRC 105917 / EY 4224 / RW1) (Sphingomonas wittichii).